We begin with the raw amino-acid sequence, 351 residues long: MLKNDLFLRALKRQPCSRTPIWVMRQAGRYLPEYRAVREKTDFLTLCKTPELAAEVTIQPVDLMGVDAAIIFSDILVVNEAMGMDVEIIESKGIRLSPAIRSQVDIDRLIIPDINEKLGYVMDAIRLTKKELDNRVPLIGFSGAAWTLFTYAVEGGGSKNYAFAKKMMYREPKMAHMLLSKISSVITEYVLMQIEAGADAIQIFDSWASALSEDDYREFALPYIKENVQAIKTKYPDTPVIVFSKDCNTILSEIADTGCDAMGLGWNMDIAKARKELNDRVCIQGNMDPTVLYGTPDKIRSEAAKILKQFGQHTATSGHVFNLGHGILPDVDPANLKLLVEFVKEESVKYH.

Substrate contacts are provided by residues 25 to 29 (RQAGR), Asp74, Tyr151, Ser206, and His325.

This sequence belongs to the uroporphyrinogen decarboxylase family. In terms of assembly, homodimer.

It localises to the cytoplasm. It catalyses the reaction uroporphyrinogen III + 4 H(+) = coproporphyrinogen III + 4 CO2. It functions in the pathway porphyrin-containing compound metabolism; protoporphyrin-IX biosynthesis; coproporphyrinogen-III from 5-aminolevulinate: step 4/4. In terms of biological role, catalyzes the decarboxylation of four acetate groups of uroporphyrinogen-III to yield coproporphyrinogen-III. The polypeptide is Uroporphyrinogen decarboxylase (Chlorobium phaeobacteroides (strain DSM 266 / SMG 266 / 2430)).